We begin with the raw amino-acid sequence, 474 residues long: Fumarate hydratase class II (474 aa).

Residues 104–106 (SGT), 128–131 (HPND), 138–140 (SSN), and Thr186 contribute to the substrate site. His187 serves as the catalytic Proton donor/acceptor. Ser318 is a catalytic residue. Residues Ser319 and 324-326 (KVN) contribute to the substrate site.

Belongs to the class-II fumarase/aspartase family. Fumarase subfamily. In terms of assembly, homotetramer.

It localises to the cytoplasm. It catalyses the reaction (S)-malate = fumarate + H2O. It functions in the pathway carbohydrate metabolism; tricarboxylic acid cycle; (S)-malate from fumarate: step 1/1. In terms of biological role, involved in the TCA cycle. Catalyzes the stereospecific interconversion of fumarate to L-malate. The protein is Fumarate hydratase class II of Mycobacterium bovis (strain ATCC BAA-935 / AF2122/97).